The chain runs to 439 residues: Methylenetetrahydrofolate--tRNA-(uracil-5-)-methyltransferase TrmFO (439 aa).

Position 8 to 13 (8 to 13 (GGGLAG)) interacts with FAD.

Belongs to the MnmG family. TrmFO subfamily. Requires FAD as cofactor.

Its subcellular location is the cytoplasm. The catalysed reaction is uridine(54) in tRNA + (6R)-5,10-methylene-5,6,7,8-tetrahydrofolate + NADH + H(+) = 5-methyluridine(54) in tRNA + (6S)-5,6,7,8-tetrahydrofolate + NAD(+). The enzyme catalyses uridine(54) in tRNA + (6R)-5,10-methylene-5,6,7,8-tetrahydrofolate + NADPH + H(+) = 5-methyluridine(54) in tRNA + (6S)-5,6,7,8-tetrahydrofolate + NADP(+). Catalyzes the folate-dependent formation of 5-methyl-uridine at position 54 (M-5-U54) in all tRNAs. This chain is Methylenetetrahydrofolate--tRNA-(uracil-5-)-methyltransferase TrmFO, found in Dictyoglomus turgidum (strain DSM 6724 / Z-1310).